The sequence spans 156 residues: Small ribosomal subunit protein uS7 (156 aa).

It belongs to the universal ribosomal protein uS7 family. Part of the 30S ribosomal subunit. Contacts proteins S9 and S11.

One of the primary rRNA binding proteins, it binds directly to 16S rRNA where it nucleates assembly of the head domain of the 30S subunit. Is located at the subunit interface close to the decoding center, probably blocks exit of the E-site tRNA. The chain is Small ribosomal subunit protein uS7 from Chelativorans sp. (strain BNC1).